The sequence spans 302 residues: Ribostamycin:4-(gamma-L-glutamylamino)-(S)-2-hydroxybutanoyl-[BtrI acyl-carrier protein] 4-(gamma-L-glutamylamino)-(S)-2-hydroxybutanoate transferase (302 aa).

The enzyme catalyses 4-(gamma-L-glutamylamino)-(2S)-2-hydroxybutanoyl-[BtrI ACP] + ribostamycin = gamma-L-glutamyl-butirosin B + holo-[BtrI ACP] + H(+). The protein operates within antibiotic biosynthesis; butirosin biosynthesis. Its function is as follows. Aminoglycoside acyltransferase that attaches the (S)-4-amino-2-hydroxybutyrate (AHBA) side chain from the acyl carrier protein BtrI to the aminoglycoside ribostamycin in the biosynthetic pathway of butirosin. The AHBA side chain protects the antibiotic from several common resistance mechanisms. This chain is Ribostamycin:4-(gamma-L-glutamylamino)-(S)-2-hydroxybutanoyl-[BtrI acyl-carrier protein] 4-(gamma-L-glutamylamino)-(S)-2-hydroxybutanoate transferase (btrH), found in Niallia circulans (Bacillus circulans).